A 366-amino-acid polypeptide reads, in one-letter code: Cyclic amide hydrolase (366 aa).

Residues 1 to 103 are RU A; the sequence is MKVGVHKLAM…TLFTRAPDDG (103 aa). Residues Arg-51 and 82-83 contribute to the substrate site; that span reads SG. The interval 110-247 is RU B; that stretch reads RLALGIGITR…CEVLLFGNAP (138 aa). The active site involves Lys-160. Residues Arg-192, 230–231, Arg-327, and 346–347 each bind substrate; these read SA and SG. Ser-230 functions as the Nucleophile in the catalytic mechanism. The interval 253-366 is RU C; sequence FRIGHGVLKD…AAPIAAIVRA (114 aa).

This sequence belongs to the cyclic amide hydrolase (CyAH) family. As to quaternary structure, homotetramer.

Functionally, cyclic amide hydrolase of unknown substrate specificity. Catalyzes the hydrolytic ring-opening of a cyclic amide. Does not act on cyanuric acid nor barbituric acid. This is Cyclic amide hydrolase from Azorhizobium caulinodans (strain ATCC 43989 / DSM 5975 / JCM 20966 / LMG 6465 / NBRC 14845 / NCIMB 13405 / ORS 571).